Here is a 213-residue protein sequence, read N- to C-terminus: Ubiquitin-conjugating enzyme E2 S (213 aa).

Positions 13-159 (QIIRQVAKEV…ARMMTEIHAK (147 aa)) constitute a UBC core domain. The Glycyl thioester intermediate role is filled by Cys97. The tract at residues 157–213 (HAKPTTKTAPTKNEETNCPSTSGTQSTSEGPMAKKHAGDKNAAEKKKKEKKRALRRL) is disordered. Positions 174 to 185 (CPSTSGTQSTSE) are enriched in polar residues. A compositionally biased stretch (basic and acidic residues) spans 192-202 (HAGDKNAAEKK). Basic residues predominate over residues 203 to 213 (KKEKKRALRRL).

The protein belongs to the ubiquitin-conjugating enzyme family.

It catalyses the reaction S-ubiquitinyl-[E1 ubiquitin-activating enzyme]-L-cysteine + [E2 ubiquitin-conjugating enzyme]-L-cysteine = [E1 ubiquitin-activating enzyme]-L-cysteine + S-ubiquitinyl-[E2 ubiquitin-conjugating enzyme]-L-cysteine.. It participates in protein modification; protein ubiquitination. In terms of biological role, catalyzes the covalent attachment of ubiquitin to other proteins. Acts as an essential factor of the anaphase promoting complex/cyclosome (APC/C), a cell cycle-regulated ubiquitin ligase that controls progression through mitosis. Acts by specifically elongating polyubiquitin chains initiated by the E2 enzyme UBCH10 on APC/C substrates, enhancing the degradation of APC/C substrates by the proteasome and promoting mitotic exit. In Branchiostoma floridae (Florida lancelet), this protein is Ubiquitin-conjugating enzyme E2 S.